Reading from the N-terminus, the 394-residue chain is S-adenosylmethionine synthase (394 aa).

Glutamate 10 lines the Mg(2+) pocket. Residue histidine 16 coordinates ATP. Glutamate 44 provides a ligand contact to K(+). Residues glutamate 57 and glutamine 100 each contribute to the L-methionine site. Residues 168 to 170 (DGK), 236 to 239 (SGRF), aspartate 247, 253 to 254 (RK), alanine 270, lysine 274, and lysine 278 contribute to the ATP site. Aspartate 247 serves as a coordination point for L-methionine. Residue lysine 278 participates in L-methionine binding.

The protein belongs to the AdoMet synthase family. In terms of assembly, homotetramer. Mn(2+) serves as cofactor. The cofactor is Mg(2+). It depends on Co(2+) as a cofactor. Requires K(+) as cofactor.

The protein resides in the cytoplasm. The enzyme catalyses L-methionine + ATP + H2O = S-adenosyl-L-methionine + phosphate + diphosphate. The protein operates within amino-acid biosynthesis; S-adenosyl-L-methionine biosynthesis; S-adenosyl-L-methionine from L-methionine: step 1/1. Catalyzes the formation of S-adenosylmethionine from methionine and ATP. The reaction comprises two steps that are both catalyzed by the same enzyme: formation of S-adenosylmethionine (AdoMet) and triphosphate, and subsequent hydrolysis of the triphosphate. The protein is S-adenosylmethionine synthase (METK) of Medicago truncatula (Barrel medic).